The following is a 252-amino-acid chain: F-box protein At5g39250 (252 aa).

Positions 1–42 constitute an F-box domain; sequence MFSEEVLKNVFPLLEGEDLASCMGVCKQWRDIARDDFYWKCQ.

This Arabidopsis thaliana (Mouse-ear cress) protein is F-box protein At5g39250.